Reading from the N-terminus, the 210-residue chain is Na(+)-translocating NADH-quinone reductase subunit D (210 aa).

The next 6 helical transmembrane spans lie at 11 to 31, 42 to 62, 72 to 92, 103 to 123, 131 to 151, and 178 to 198; these read ILAP…VCSA, FVMT…VSLI, IIVQ…VLKA, VFVG…AFAM, FIDG…VGFF, and NGLM…IWAI.

The protein belongs to the NqrDE/RnfAE family. Composed of six subunits; NqrA, NqrB, NqrC, NqrD, NqrE and NqrF.

It localises to the cell inner membrane. The enzyme catalyses a ubiquinone + n Na(+)(in) + NADH + H(+) = a ubiquinol + n Na(+)(out) + NAD(+). NQR complex catalyzes the reduction of ubiquinone-1 to ubiquinol by two successive reactions, coupled with the transport of Na(+) ions from the cytoplasm to the periplasm. NqrA to NqrE are probably involved in the second step, the conversion of ubisemiquinone to ubiquinol. The polypeptide is Na(+)-translocating NADH-quinone reductase subunit D (Vibrio atlanticus (strain LGP32) (Vibrio splendidus (strain Mel32))).